A 506-amino-acid chain; its full sequence is Aldehyde dehydrogenase (506 aa).

An NAD(+)-binding site is contributed by G218–G224. Active-site residues include E262 and C301.

Belongs to the aldehyde dehydrogenase family.

The catalysed reaction is an aldehyde + NAD(+) + H2O = a carboxylate + NADH + 2 H(+). This is Aldehyde dehydrogenase from Rhodospirillum rubrum (strain ATCC 11170 / ATH 1.1.1 / DSM 467 / LMG 4362 / NCIMB 8255 / S1).